Reading from the N-terminus, the 811-residue chain is Elongation factor G, mitochondrial (811 aa).

A mitochondrion-targeting transit peptide spans 1–64 (MSAIARAAAR…FQQSFQRRWA (64 aa)). Positions 96-394 (RRQRNVGISA…GVCAYLPNPS (299 aa)) constitute a tr-type G domain. Residues 105-112 (AHIDSGKT), 192-196 (DTPGH), and 246-249 (NKMD) contribute to the GTP site.

The protein belongs to the TRAFAC class translation factor GTPase superfamily. Classic translation factor GTPase family. EF-G/EF-2 subfamily.

Its subcellular location is the mitochondrion. It functions in the pathway protein biosynthesis; polypeptide chain elongation. In terms of biological role, mitochondrial GTPase that catalyzes the GTP-dependent ribosomal translocation step during translation elongation. During this step, the ribosome changes from the pre-translocational (PRE) to the post-translocational (POST) state as the newly formed A-site-bound peptidyl-tRNA and P-site-bound deacylated tRNA move to the P and E sites, respectively. Catalyzes the coordinated movement of the two tRNA molecules, the mRNA and conformational changes in the ribosome. This Cryptococcus neoformans var. neoformans serotype D (strain JEC21 / ATCC MYA-565) (Filobasidiella neoformans) protein is Elongation factor G, mitochondrial.